A 131-amino-acid polypeptide reads, in one-letter code: Profilin-10 (131 aa).

A disulfide bond links Cys-13 and Cys-115. The Involved in PIP2 interaction signature appears at 81-97 (AVIRGKKGSGGITVKKT). A Phosphothreonine modification is found at Thr-111.

This sequence belongs to the profilin family. As to quaternary structure, occurs in many kinds of cells as a complex with monomeric actin in a 1:1 ratio. Phosphorylated by MAP kinases.

It is found in the cytoplasm. Its subcellular location is the cytoskeleton. Binds to actin and affects the structure of the cytoskeleton. At high concentrations, profilin prevents the polymerization of actin, whereas it enhances it at low concentrations. This Zea mays (Maize) protein is Profilin-10.